Consider the following 224-residue polypeptide: Mammalian ependymin-related protein 1 (224 aa).

The N-terminal stretch at 1–37 (MPARAPRRLVQGPRGTWLLGSLWVWVLCGLGMAGSLG) is a signal peptide. Cystine bridges form between Cys42–Cys172, Cys88–Cys222, and Cys113–Cys210. Residues Asn130 and Asn182 are each glycosylated (N-linked (GlcNAc...) asparagine).

Belongs to the ependymin family. Homodimer. Post-translationally, N-glycosylated; the glycan contains mannose-6-phosphate moieties. Detected in brain, small intestine and in soleus, extensor digitorum longus and white gastrocnemius (at protein level). Detected in brain and skeletal muscle, and at lower leavels in heart.

The protein resides in the lysosome lumen. Its subcellular location is the secreted. Binds anionic lipids and gangliosides at acidic pH. This Mus musculus (Mouse) protein is Mammalian ependymin-related protein 1 (Epdr1).